The chain runs to 68 residues: Small ribosomal subunit protein bS18c (68 aa).

It belongs to the bacterial ribosomal protein bS18 family. Part of the 30S ribosomal subunit.

Its subcellular location is the plastid. The protein localises to the chloroplast. In Cyanidium caldarium (Red alga), this protein is Small ribosomal subunit protein bS18c (rps18).